Reading from the N-terminus, the 157-residue chain is Small ribosomal subunit protein uS7 (157 aa).

This sequence belongs to the universal ribosomal protein uS7 family. Part of the 30S ribosomal subunit. Contacts proteins S9 and S11.

In terms of biological role, one of the primary rRNA binding proteins, it binds directly to 16S rRNA where it nucleates assembly of the head domain of the 30S subunit. Is located at the subunit interface close to the decoding center, probably blocks exit of the E-site tRNA. The protein is Small ribosomal subunit protein uS7 of Hydrogenovibrio crunogenus (strain DSM 25203 / XCL-2) (Thiomicrospira crunogena).